A 648-amino-acid polypeptide reads, in one-letter code: Serine/threonine-protein kinase plk-1 (648 aa).

Residues 1-24 form a disordered region; sequence MNRLPNIAKPPQKSNQRKEKAPPE. The region spanning 38–289 is the Protein kinase domain; that stretch reads YEKGRFLGKG…AKQVQRDGFF (252 aa). ATP contacts are provided by residues 44–52 and lysine 67; that span reads LGKGGFAHC. Aspartate 161 (proton acceptor) is an active-site residue. 2 POLO box domains span residues 412–492 and 514–596; these read WISK…YMND and TLRV…RLMS. Over residues 612-629 the composition is skewed to low complexity; that stretch reads PRSMAAARSASAGSRGPN.

It belongs to the protein kinase superfamily. Ser/Thr protein kinase family. CDC5/Polo subfamily. In terms of assembly, interacts with mex-5, mex-6 and spat-1. Embryos.

It is found in the cytoplasm. It localises to the cytoskeleton. The protein localises to the microtubule organizing center. The protein resides in the centrosome. Its subcellular location is the midbody. It is found in the nucleus. It localises to the chromosome. The protein localises to the centromere. The protein resides in the kinetochore. The enzyme catalyses L-seryl-[protein] + ATP = O-phospho-L-seryl-[protein] + ADP + H(+). The catalysed reaction is L-threonyl-[protein] + ATP = O-phospho-L-threonyl-[protein] + ADP + H(+). Its function is as follows. Required for oocyte nuclear envelope breakdown before entry of oocyte into spermatheca. In meiotic cells, required for spindle dynamics and probably for spindle attachment to the chromosomes. Zygotic role in the development of the germline and nerve cord. In mitotic cells, plays a role in spindle organization and centrosome maturation. Involved in asymmetric nuclear localization of cdc-25.1 during embryogenesis which affects cell division timing. Together with plk-2, regulates cytoplasm polarity in early embryos. May play a minor role in chromosome pairing and synapsis during oocyte meiosis I. This is Serine/threonine-protein kinase plk-1 (plk-1) from Caenorhabditis elegans.